Reading from the N-terminus, the 237-residue chain is Sugar fermentation stimulation protein homolog (237 aa).

This sequence belongs to the SfsA family.

The sequence is that of Sugar fermentation stimulation protein homolog from Pseudomonas putida (strain GB-1).